The chain runs to 134 residues: Protein Turandot E (134 aa).

The signal sequence occupies residues 1–38 (MSYTRTIHSSASILKMNSALQISCLLVVLGCLLGSGHC).

The protein belongs to the Turandot family.

Its subcellular location is the secreted. Its function is as follows. A humoral factor that may play a role in stress tolerance. The sequence is that of Protein Turandot E from Drosophila sechellia (Fruit fly).